The primary structure comprises 221 residues: MAQQSLIYSFVARGTVILVEFTDFKGNFTSIAAQCLQKLPSSNNKFTYNCDGHTFNYLVENGFTYCVVAVDSAGRQIPMAFLERVKEDFNKRYGGGKAATAQANSLNKEFGSKLKEHMQYCMDHPDEISKLAKVKAQVSEVKGVMMENIEKVLDRGEKIELLVDKTENLRSQAQDFRTQGTQMRRKMWFQNMKIKLIVLAIIIALILIIILSICGGFNCGK.

Residues 1 to 196 lie on the Cytoplasmic side of the membrane; that stretch reads MAQQSLIYSF…MWFQNMKIKL (196 aa). In terms of domain architecture, Longin spans 10 to 114; the sequence is FVARGTVILV…SLNKEFGSKL (105 aa). Residues 130–190 enclose the v-SNARE coiled-coil homology domain; the sequence is KLAKVKAQVS…TQMRRKMWFQ (61 aa). The chain crosses the membrane as a helical; Anchor for type IV membrane protein span at residues 197–217; it reads IVLAIIIALILIIILSICGGF. The Vesicular portion of the chain corresponds to 218-221; the sequence is NCGK.

It belongs to the synaptobrevin family. In terms of tissue distribution, highly expressed in stems and roots. Detected in flowers and leaves.

The protein localises to the cell membrane. The protein resides in the early endosome membrane. In terms of biological role, involved in the targeting and/or fusion of transport vesicles to their target membrane. The polypeptide is Vesicle-associated membrane protein 722 (Arabidopsis thaliana (Mouse-ear cress)).